The primary structure comprises 378 residues: MDYDRIRPVRFLTGVLKWWRLWPRKESVSTPDWTNWQAYALHVPFTFLFVLLLWLEAIKSRDIQHTADVLLICLTTTALGGKVINIWKYAHVAQGILSEWSTWDLFELRSKQEVDMWRFEHRRFNRVFMFYCLCSAGVIPFIVIQPLFDIPNRLPFWMWTPFDWQQPVLFWYAFIYQATTIPIACACNVTMDAVNWYLMLHLSLCLRMLGQRLSKLQHDDKDLREKFLELIHLHQRLKQQALSIEIFISKSTFTQILVSSLIICFTIYSMQMSPVLQDLPGFAAMMQYLVAMIMQVMLPTIYGNAVIDSANMLTDSMYNSDWPDMNCRMRRLVLMFMVYLNRPVTLKAGGFFHIGLPLFTKTMNQAYSLLALLLNMNQ.

The Cytoplasmic segment spans residues 1–37; sequence MDYDRIRPVRFLTGVLKWWRLWPRKESVSTPDWTNWQ. The helical transmembrane segment at 38–58 threads the bilayer; that stretch reads AYALHVPFTFLFVLLLWLEAI. Topologically, residues 59-66 are extracellular; the sequence is KSRDIQHT. Residues 67–87 form a helical membrane-spanning segment; that stretch reads ADVLLICLTTTALGGKVINIW. Residues 88–127 are Cytoplasmic-facing; the sequence is KYAHVAQGILSEWSTWDLFELRSKQEVDMWRFEHRRFNRV. The chain crosses the membrane as a helical span at residues 128–148; the sequence is FMFYCLCSAGVIPFIVIQPLF. The Extracellular segment spans residues 149–166; that stretch reads DIPNRLPFWMWTPFDWQQ. A helical membrane pass occupies residues 167-187; sequence PVLFWYAFIYQATTIPIACAC. At 188-255 the chain is on the cytoplasmic side; that stretch reads NVTMDAVNWY…IFISKSTFTQ (68 aa). The chain crosses the membrane as a helical span at residues 256–276; sequence ILVSSLIICFTIYSMQMSPVL. Residues 277–280 are Extracellular-facing; sequence QDLP. A helical transmembrane segment spans residues 281–301; sequence GFAAMMQYLVAMIMQVMLPTI. Over 302–343 the chain is Cytoplasmic; the sequence is YGNAVIDSANMLTDSMYNSDWPDMNCRMRRLVLMFMVYLNRP. The helical transmembrane segment at 344–364 threads the bilayer; sequence VTLKAGGFFHIGLPLFTKTMN. The Extracellular portion of the chain corresponds to 365–378; sequence QAYSLLALLLNMNQ.

The protein belongs to the insect chemoreceptor superfamily. Heteromeric odorant receptor channel (TC 1.A.69) family. Or2a subfamily. As to quaternary structure, interacts with Orco. Complexes exist early in the endomembrane system in olfactory sensory neurons (OSNs), coupling these complexes to the conserved ciliary trafficking pathway. Expressed in olfactory sensory neurons in the maxillary palp.

The protein resides in the cell membrane. Odorant receptor which mediates acceptance or avoidance behavior, depending on its substrates. The odorant receptor repertoire encodes a large collection of odor stimuli that vary widely in identity, intensity, and duration. May form a complex with Orco to form odorant-sensing units, providing sensitive and prolonged odorant signaling and calcium permeability. The sequence is that of Putative odorant receptor 71a (Or71a) from Drosophila melanogaster (Fruit fly).